Here is a 480-residue protein sequence, read N- to C-terminus: Wax ester synthase/diacylglycerol acyltransferase 7 (480 aa).

At Met-1–Thr-193 the chain is on the cytoplasmic side. The active-site Proton acceptor is the His-135. Residues Met-194 to Leu-214 traverse the membrane as a helical segment. Residues Lys-215–Asn-329 are Lumenal-facing. Asn-252 carries an N-linked (GlcNAc...) asparagine glycan. Residues Tyr-330–Leu-350 form a helical membrane-spanning segment. Residues Lys-351–His-365 are Cytoplasmic-facing. The helical transmembrane segment at Ala-366–Ala-386 threads the bilayer. Topologically, residues Glu-387 to Leu-480 are lumenal. Asn-395 carries an N-linked (GlcNAc...) asparagine glycan.

This sequence in the N-terminal section; belongs to the long-chain O-acyltransferase family. Expressed in roots, stems, leaves, flowers and siliques.

It is found in the cell membrane. It localises to the endoplasmic reticulum membrane. The protein resides in the golgi apparatus membrane. The enzyme catalyses an acyl-CoA + a 1,2-diacyl-sn-glycerol = a triacyl-sn-glycerol + CoA. The catalysed reaction is a long chain fatty alcohol + a fatty acyl-CoA = a wax ester + CoA. Its pathway is glycerolipid metabolism; triacylglycerol biosynthesis. It participates in lipid metabolism. Functionally, bifunctional wax ester synthase/diacylglycerol acyltransferase that uses acyl-CoAs with 14, 16 and 18 carbons as substrates, preferably in combination with 16:0ol alcohol. Involved in cuticular wax biosynthesis. The sequence is that of Wax ester synthase/diacylglycerol acyltransferase 7 from Arabidopsis thaliana (Mouse-ear cress).